Here is a 238-residue protein sequence, read N- to C-terminus: Ribonuclease 3 (238 aa).

Residues 8-135 form the RNase III domain; sequence VAELERRIGY…LIAALYIDGG (128 aa). Mg(2+) is bound at residue E48. Residue D52 is part of the active site. D121 and E124 together coordinate Mg(2+). The active site involves E124. The 70-residue stretch at 161-230 folds into the DRBM domain; that stretch reads DPKTQLQEWV…AQCMLLKREG (70 aa).

This sequence belongs to the ribonuclease III family. Homodimer. Requires Mg(2+) as cofactor.

It localises to the cytoplasm. It catalyses the reaction Endonucleolytic cleavage to 5'-phosphomonoester.. In terms of biological role, digests double-stranded RNA. Involved in the processing of primary rRNA transcript to yield the immediate precursors to the large and small rRNAs (23S and 16S). Processes some mRNAs, and tRNAs when they are encoded in the rRNA operon. Processes pre-crRNA and tracrRNA of type II CRISPR loci if present in the organism. This chain is Ribonuclease 3, found in Phenylobacterium zucineum (strain HLK1).